The following is a 300-amino-acid chain: Peptidyl-prolyl cis-trans isomerase E (300 aa).

The region spanning 6–84 (RTIYVGGLAD…RTIRVNLAKP (79 aa)) is the RRM domain. Residues 142 to 298 (FFDIRIGGND…QKIVIYSCGE (157 aa)) form the PPIase cyclophilin-type domain.

This sequence belongs to the cyclophilin-type PPIase family. PPIase E subfamily.

The protein localises to the nucleus. The catalysed reaction is [protein]-peptidylproline (omega=180) = [protein]-peptidylproline (omega=0). Its function is as follows. PPIases accelerate the folding of proteins. It catalyzes the cis-trans isomerization of proline imidic peptide bonds in oligopeptides. Combines RNA-binding and PPIase activities. The chain is Peptidyl-prolyl cis-trans isomerase E (cyp33) from Drosophila melanogaster (Fruit fly).